Here is a 62-residue protein sequence, read N- to C-terminus: uncharacterized protein (62 aa).

Residues 37-57 form a helical membrane-spanning segment; sequence FILGVILLGVIIESITLLVVY.

The protein localises to the membrane. This is an uncharacterized protein from Dictyostelium discoideum (Social amoeba).